A 126-amino-acid polypeptide reads, in one-letter code: Aspartate 1-decarboxylase (126 aa).

Catalysis depends on Ser25, which acts as the Schiff-base intermediate with substrate; via pyruvic acid. Ser25 is modified (pyruvic acid (Ser)). Thr57 contributes to the substrate binding site. The Proton donor role is filled by Tyr58. A substrate-binding site is contributed by 73 to 75; that stretch reads GAA.

Belongs to the PanD family. In terms of assembly, heterooctamer of four alpha and four beta subunits. It depends on pyruvate as a cofactor. Is synthesized initially as an inactive proenzyme, which is activated by self-cleavage at a specific serine bond to produce a beta-subunit with a hydroxyl group at its C-terminus and an alpha-subunit with a pyruvoyl group at its N-terminus.

Its subcellular location is the cytoplasm. The enzyme catalyses L-aspartate + H(+) = beta-alanine + CO2. It functions in the pathway cofactor biosynthesis; (R)-pantothenate biosynthesis; beta-alanine from L-aspartate: step 1/1. Its function is as follows. Catalyzes the pyruvoyl-dependent decarboxylation of aspartate to produce beta-alanine. The sequence is that of Aspartate 1-decarboxylase from Pseudomonas fluorescens.